The following is a 116-amino-acid chain: Large ribosomal subunit protein uL18 (116 aa).

This sequence belongs to the universal ribosomal protein uL18 family. As to quaternary structure, part of the 50S ribosomal subunit; part of the 5S rRNA/L5/L18/L25 subcomplex. Contacts the 5S and 23S rRNAs.

Its function is as follows. This is one of the proteins that bind and probably mediate the attachment of the 5S RNA into the large ribosomal subunit, where it forms part of the central protuberance. The polypeptide is Large ribosomal subunit protein uL18 (Pseudomonas entomophila (strain L48)).